Reading from the N-terminus, the 257-residue chain is Outer membrane protein YaiO (257 aa).

An N-terminal signal peptide occupies residues 1–19; that stretch reads MIKRTLLAAAIFSALPAYA.

The protein localises to the cell outer membrane. This is Outer membrane protein YaiO (yaiO) from Escherichia coli (strain K12).